The chain runs to 92 residues: Small ribosomal subunit protein uS19 (92 aa).

Belongs to the universal ribosomal protein uS19 family.

Its function is as follows. Protein S19 forms a complex with S13 that binds strongly to the 16S ribosomal RNA. In Crocosphaera subtropica (strain ATCC 51142 / BH68) (Cyanothece sp. (strain ATCC 51142)), this protein is Small ribosomal subunit protein uS19.